The following is a 204-amino-acid chain: Glycerol-3-phosphate acyltransferase (204 aa).

The next 4 membrane-spanning stretches (helical) occupy residues asparagine 8–alanine 28, glycine 76–isoleucine 96, methionine 122–leucine 142, and phenylalanine 166–tyrosine 186.

The protein belongs to the PlsY family. In terms of assembly, probably interacts with PlsX.

It is found in the cell inner membrane. It catalyses the reaction an acyl phosphate + sn-glycerol 3-phosphate = a 1-acyl-sn-glycero-3-phosphate + phosphate. Its pathway is lipid metabolism; phospholipid metabolism. Its function is as follows. Catalyzes the transfer of an acyl group from acyl-phosphate (acyl-PO(4)) to glycerol-3-phosphate (G3P) to form lysophosphatidic acid (LPA). This enzyme utilizes acyl-phosphate as fatty acyl donor, but not acyl-CoA or acyl-ACP. In Sulfurimonas denitrificans (strain ATCC 33889 / DSM 1251) (Thiomicrospira denitrificans (strain ATCC 33889 / DSM 1251)), this protein is Glycerol-3-phosphate acyltransferase.